The following is a 340-amino-acid chain: UDP-glucose 4-epimerase (340 aa).

NAD(+) is bound by residues 12–13 (FI), 32–37 (DNYGNS), 59–60 (DV), 81–85 (FAGLK), Asn100, Ser125, Tyr150, Lys154, and Phe179. 2 residues coordinate substrate: Ser125 and Tyr150. The active-site Proton acceptor is the Tyr150. Residues Asn180, 200–201 (NL), 217–219 (QVY), Arg232, and 292–295 (RPGD) contribute to the substrate site.

Belongs to the NAD(P)-dependent epimerase/dehydratase family. As to quaternary structure, homodimer. Requires NAD(+) as cofactor.

It catalyses the reaction UDP-alpha-D-glucose = UDP-alpha-D-galactose. It functions in the pathway carbohydrate metabolism; galactose metabolism. Its function is as follows. Involved in the metabolism of galactose. Catalyzes the conversion of UDP-galactose (UDP-Gal) to UDP-glucose (UDP-Glc) through a mechanism involving the transient reduction of NAD. Can also epimerize UDP-GalNAc to UDP-GlcNAc. Involved in the lacto-N-biose I/galacto-N-biose (LNB/GNB) degradation pathway, which is important for host intestinal colonization by bifidobacteria. The sequence is that of UDP-glucose 4-epimerase (lnpD) from Bifidobacterium longum subsp. longum (strain ATCC 15707 / DSM 20219 / JCM 1217 / NCTC 11818 / E194b).